The sequence spans 39 residues: Bomanin Short 3 (39 aa).

A signal peptide spans 1–18; it reads MKFLSLAFVLGLLALANA. Positions 19-23 are excised as a propeptide; sequence TPLNP. Cysteines 32 and 35 form a disulfide.

The protein belongs to the bomanin family. As to expression, hemolymph (at protein level).

Its subcellular location is the secreted. Functionally, secreted immune-induced peptide induced by Toll signaling. Has a role in resistance bacterial and fungal infections. The strength of antimicrobial activity appears to correlate with the overall level of expression. Has no activity against the fungus C.glabrata in vitro. In Drosophila melanogaster (Fruit fly), this protein is Bomanin Short 3.